The following is a 267-amino-acid chain: MRILVKISYQGSNFLGFQIQQHGRTVQQQFEKILKRMHKRHVRIHPSSRTDRGVHAIEQYFHFDTELNIAPDKWQYAMNSALPDDIYVNEVSIVDDDFHCRYDCVGKRYRYKVYQGKHRDVFMSGLKTFYADSLDLEKMNEAAQQFIGTHDFTGFCSQKTEVESKERTLYQSEIIKTENGFDYIVTGSGFLYNMVRVLVAFLIEVGKGKRQPEEVPILLEAKDRKQVPFTAPAEGLYLEKIYLAPQELINDFGPDIKIHRKKSLEND.

Asp51 serves as the catalytic Nucleophile. A substrate-binding site is contributed by Tyr109.

Belongs to the tRNA pseudouridine synthase TruA family. As to quaternary structure, homodimer.

The catalysed reaction is uridine(38/39/40) in tRNA = pseudouridine(38/39/40) in tRNA. Formation of pseudouridine at positions 38, 39 and 40 in the anticodon stem and loop of transfer RNAs. This Staphylococcus carnosus (strain TM300) protein is tRNA pseudouridine synthase A.